Here is a 172-residue protein sequence, read N- to C-terminus: Odorant-binding protein (172 aa).

Residues 1-15 form the signal peptide; sequence MVKFLLIVLALGVSC. Disulfide bonds link Cys60–Cys64 and Cys79–Cys170.

This sequence belongs to the calycin superfamily. Lipocalin family. In terms of assembly, homodimer.

It is found in the secreted. This protein is found in nasal epithelium and it binds a wide variety of chemical odorants. This chain is Odorant-binding protein (Obp1f), found in Rattus norvegicus (Rat).